Consider the following 358-residue polypeptide: Aminodeoxyfutalosine deaminase (358 aa).

2 residues coordinate Zn(2+): His-32 and His-34. Substrate-binding residues include Arg-87, Asp-154, and Gly-188. Residue His-215 participates in Zn(2+) binding. The Proton donor role is filled by Glu-218. Asp-296 contacts Zn(2+).

This sequence belongs to the metallo-dependent hydrolases superfamily. Adenosine and AMP deaminases family. Requires Zn(2+) as cofactor.

It carries out the reaction 6-amino-6-deoxyfutalosine + H2O + H(+) = futalosine + NH4(+). It functions in the pathway quinol/quinone metabolism; menaquinone biosynthesis. Functionally, catalyzes the deamination of aminodeoxyfutalosine (AFL) into futalosine (FL), a step in the biosynthesis of menaquinone (MK, vitamin K2). To a lesser extent, can also deaminate adenosine, 5'-methylthioadenosine, 5'-deoxyadenosine, and 2'-deoxyadenosine. In Streptomyces avermitilis (strain ATCC 31267 / DSM 46492 / JCM 5070 / NBRC 14893 / NCIMB 12804 / NRRL 8165 / MA-4680), this protein is Aminodeoxyfutalosine deaminase (add2).